Here is a 269-residue protein sequence, read N- to C-terminus: Peptide deformylase 1A, chloroplastic/mitochondrial (269 aa).

The transit peptide at 1 to 60 (MGLHRDEATAMETLFRVSLRLLPVSAAVTCRSIRFPVSRPGSSHLLNRKLYNLPTSSSSS) directs the protein to the chloroplast and mitochondrion. Substrate is bound by residues 123 to 126 (PGVG) and glycine 187. Cysteine 188 contributes to the Zn(2+) binding site. The tract at residues 191 to 196 (VDGFRA) is dimerization. Histidine 230 contacts Zn(2+). Glutamate 231 is a catalytic residue. Histidine 234 is a binding site for Zn(2+). The tract at residues 236-254 (DGNLYVDKMVPRTFRTVDN) is dimerization.

This sequence belongs to the polypeptide deformylase family. Homodimer. Requires Zn(2+) as cofactor. As to expression, expressed in roots, leaves, flowers and siliques.

The protein localises to the plastid. The protein resides in the chloroplast stroma. It localises to the mitochondrion. It catalyses the reaction N-terminal N-formyl-L-methionyl-[peptide] + H2O = N-terminal L-methionyl-[peptide] + formate. Inhibited by actinonin. Removes the formyl group from the N-terminal Met of newly synthesized proteins. The sequence is that of Peptide deformylase 1A, chloroplastic/mitochondrial (PDF1A) from Arabidopsis thaliana (Mouse-ear cress).